The chain runs to 78 residues: Gas vesicle protein G (78 aa).

This sequence belongs to the gas vesicle GvpG family.

It is found in the gas vesicle. Might be a minor component of the gas vesicle involved in nucleating their formation. Gas vesicles are hollow, gas filled proteinaceous nanostructures found in some microorganisms. It is not clear what function gas vesicles perform in soil bacteria. This is Gas vesicle protein G from Streptomyces sp. (strain CB03234).